The chain runs to 511 residues: MEKFEGYSEKQKSRQQYFVYPLLFQEYIYAFAHDYGLNGSEPVEIVSWNNKKFSSLLVKRLIIRMYQQNFLDNSVNHPNQDRLLDYKNYFYSEFYSQILSEGFAIVVEIPFSLRELSCPKEKEIPKFQNLRSIHSIFPFLEDKFLHLDYLSHIEIPYPIHLEILVQLLQYRIQDVPSLHLLRFFLNYYSNWNSFITSMKSFFFFQKENKRLVKFLYNSYVSEYEFFLLFLRKQSSCLPLAYSGTFLERIHFSRKMEHFGIMYPGFSRKTLWFFMDPLMHYVRYQGKAILASKGSFFLKKKWKCYLINFWQYYFFFWTQPRRIHINQLANSCFDFMGYLSSVPKSPLLVRNQMLENSFLIDTRMKKFDTIVPATLLIGYLSKAQFCTGSGHPISKPIWTDLSDWDILDRFGRICRNLFHYHSGSSKKQTLYRLKYILRLSCARTLARKHKSTVRTFMQRLGSAFLEEFFTEEEQVFSLMFTKTTLFSFSGSHTERIWYLDIIGINDLVNPLN.

It belongs to the intron maturase 2 family. MatK subfamily.

The protein resides in the plastid. The protein localises to the chloroplast. Functionally, usually encoded in the trnK tRNA gene intron. Probably assists in splicing its own and other chloroplast group II introns. This chain is Maturase K, found in Hordeum bulbosum (Bulbous barley).